Consider the following 133-residue polypeptide: Profilin-3 (133 aa).

A disulfide bridge connects residues cysteine 13 and cysteine 117. An Involved in PIP2 interaction motif is present at residues 83–99; sequence AVIRGKKGSGGITIKKT. Residue threonine 113 is modified to Phosphothreonine.

It belongs to the profilin family. Occurs in many kinds of cells as a complex with monomeric actin in a 1:1 ratio. Post-translationally, phosphorylated by MAP kinases.

The protein localises to the cytoplasm. Its subcellular location is the cytoskeleton. In terms of biological role, binds to actin and affects the structure of the cytoskeleton. At high concentrations, profilin prevents the polymerization of actin, whereas it enhances it at low concentrations. This Corylus avellana (European hazel) protein is Profilin-3.